A 104-amino-acid chain; its full sequence is MYAVVVTGGKQYKVTEGDVLFVEKLDAEVDAAIELDNVLAISKDNGEFVVGKPVVEGAKVTAKVLKQGKAKKVVVFKYKPKKHYRKKQGHRQPYTKIQIEKINA.

This sequence belongs to the bacterial ribosomal protein bL21 family. In terms of assembly, part of the 50S ribosomal subunit. Contacts protein L20.

In terms of biological role, this protein binds to 23S rRNA in the presence of protein L20. The sequence is that of Large ribosomal subunit protein bL21 from Clostridium tetani (strain Massachusetts / E88).